A 1123-amino-acid polypeptide reads, in one-letter code: Phytochrome A (1123 aa).

The span at 1–14 shows a compositional bias: low complexity; the sequence is MSSSRPSQSSTTSS. The disordered stretch occupies residues 1-20; the sequence is MSSSRPSQSSTTSSRSKHSA. The GAF domain maps to 218-401; it reads SMERLCDTMV…VFAILVNKEL (184 aa). C323 provides a ligand contact to phytochromobilin. One can recognise a PAS 1 domain in the interval 617–687; it reads VTAEMVRLIE…KMLELALQGQ (71 aa). The region spanning 690 to 746 is the PAC domain; it reads RNVEFEIKTHGPSRDSSPISLIVNACASKDVRDSVVGVCFIAQDITGQKSIMDKFTR. The 75-residue stretch at 747 to 821 folds into the PAS 2 domain; that stretch reads IEGDYRAIIQ…KNQEAFVNFG (75 aa). One can recognise a Histidine kinase domain in the interval 901 to 1118; sequence YIRRQIRNPL…TFIISVELAV (218 aa).

It belongs to the phytochrome family. Homodimer. In terms of processing, contains one covalently linked phytochromobilin chromophore.

Its function is as follows. Regulatory photoreceptor which exists in two forms that are reversibly interconvertible by light: the Pr form that absorbs maximally in the red region of the spectrum and the Pfr form that absorbs maximally in the far-red region. Photoconversion of Pr to Pfr induces an array of morphogenic responses, whereas reconversion of Pfr to Pr cancels the induction of those responses. Pfr controls the expression of a number of nuclear genes including those encoding the small subunit of ribulose-bisphosphate carboxylase, chlorophyll A/B binding protein, protochlorophyllide reductase, rRNA, etc. It also controls the expression of its own gene(s) in a negative feedback fashion. In Solanum tuberosum (Potato), this protein is Phytochrome A (PHYA).